A 205-amino-acid chain; its full sequence is Non-specific lipid transfer protein GPI-anchored 21 (205 aa).

A signal peptide spans 1-27 (MNSNSFLISAALIFSLLSSNSPTSILA). Intrachain disulfides connect C33-C75, C44-C59, C60-C100, and C73-C109. The N-linked (GlcNAc...) asparagine glycan is linked to N89. Positions 116–182 (LPTPGPASFG…FAPPPPSSSP (67 aa)) are disordered. Low complexity predominate over residues 126–156 (PTTSPTDSQTSDPEGSASFRPPTSPTTSQTP). S179 carries GPI-anchor amidated serine lipidation. Residues 180-205 (SSPSSSHSLKLSYLLFAFAFTIIKFI) constitute a propeptide, removed in mature form.

This sequence belongs to the plant LTP family.

Its subcellular location is the cell membrane. Its function is as follows. Probable lipid transfer protein. This Arabidopsis thaliana (Mouse-ear cress) protein is Non-specific lipid transfer protein GPI-anchored 21.